The chain runs to 92 residues: C-C motif chemokine 4 (92 aa).

An N-terminal signal peptide occupies residues 1 to 23; sequence MKLGVTVLSVALLVAALCPPALS. 2 disulfides stabilise this stretch: cysteine 34–cysteine 58 and cysteine 35–cysteine 74.

This sequence belongs to the intercrine beta (chemokine CC) family. Homodimer.

It is found in the secreted. In terms of biological role, monokine with inflammatory and chemokinetic properties. This is C-C motif chemokine 4 (CCL4) from Oryctolagus cuniculus (Rabbit).